Reading from the N-terminus, the 1028-residue chain is Formate dehydrogenase major subunit (1028 aa).

The tat-type signal signal peptide spans 1-33; that stretch reads MQVSRRKFFKICAGGMAGTSAAMLGFAPANVLA. Positions 43–114 constitute a 4Fe-4S Mo/W bis-MGD-type domain; sequence AFESRNTCTY…GSLDYVNSES (72 aa). The [4Fe-4S] cluster site is built by Cys50, Cys53, Cys57, and Cys100. Sec204 is a non-standard amino acid (selenocysteine).

Belongs to the prokaryotic molybdopterin-containing oxidoreductase family. In terms of assembly, formate dehydrogenase is a membrane-bound complex, formed by subunits alpha, beta and gamma. Mo-bis(molybdopterin guanine dinucleotide) is required as a cofactor. The cofactor is [4Fe-4S] cluster. Predicted to be exported by the Tat system. The position of the signal peptide cleavage has not been experimentally proven.

The protein resides in the periplasm. It catalyses the reaction formate + NAD(+) = CO2 + NADH. In terms of biological role, allows to use formate as major electron donor during anaerobic respiration. Subunit alpha possibly forms the active site. This chain is Formate dehydrogenase major subunit (fdxG), found in Haemophilus influenzae (strain ATCC 51907 / DSM 11121 / KW20 / Rd).